The primary structure comprises 206 residues: Imidazoleglycerol-phosphate dehydratase (206 aa).

This sequence belongs to the imidazoleglycerol-phosphate dehydratase family.

It localises to the cytoplasm. The catalysed reaction is D-erythro-1-(imidazol-4-yl)glycerol 3-phosphate = 3-(imidazol-4-yl)-2-oxopropyl phosphate + H2O. It functions in the pathway amino-acid biosynthesis; L-histidine biosynthesis; L-histidine from 5-phospho-alpha-D-ribose 1-diphosphate: step 6/9. The sequence is that of Imidazoleglycerol-phosphate dehydratase from Saccharopolyspora erythraea (strain ATCC 11635 / DSM 40517 / JCM 4748 / NBRC 13426 / NCIMB 8594 / NRRL 2338).